We begin with the raw amino-acid sequence, 304 residues long: uncharacterized protein (304 aa).

2 coiled-coil regions span residues 3–35 and 89–132; these read KNQY…DKEI and KSNK…NSNL. Residues 96–121 form a disordered region; it reads LQNKQQENSEEKNSEEKNSEEKNSEE.

This is an uncharacterized protein from Acanthamoeba polyphaga (Amoeba).